The chain runs to 58 residues: Large ribosomal subunit protein bL32 (58 aa).

Residues 1–19 show a composition bias toward basic residues; sequence MAVPKRKTSKSNTKMRRAA. Residues 1–22 form a disordered region; sequence MAVPKRKTSKSNTKMRRAANSK.

This sequence belongs to the bacterial ribosomal protein bL32 family.

In Clostridioides difficile (strain 630) (Peptoclostridium difficile), this protein is Large ribosomal subunit protein bL32.